The sequence spans 190 residues: Xanthine phosphoribosyltransferase (190 aa).

Leu20 and Asn27 together coordinate xanthine. 128 to 132 (ANGHA) contributes to the 5-phospho-alpha-D-ribose 1-diphosphate binding site. Lys156 provides a ligand contact to xanthine.

This sequence belongs to the purine/pyrimidine phosphoribosyltransferase family. Xpt subfamily. Homodimer.

The protein resides in the cytoplasm. The enzyme catalyses XMP + diphosphate = xanthine + 5-phospho-alpha-D-ribose 1-diphosphate. It functions in the pathway purine metabolism; XMP biosynthesis via salvage pathway; XMP from xanthine: step 1/1. Converts the preformed base xanthine, a product of nucleic acid breakdown, to xanthosine 5'-monophosphate (XMP), so it can be reused for RNA or DNA synthesis. The sequence is that of Xanthine phosphoribosyltransferase from Ectopseudomonas mendocina (strain ymp) (Pseudomonas mendocina).